The sequence spans 52 residues: Insulin (52 aa).

3 disulfide bridges follow: Cys-9–Cys-38, Cys-21–Cys-51, and Cys-37–Cys-42.

Belongs to the insulin family. Heterodimer of a B chain and an A chain linked by two disulfide bonds.

The protein localises to the secreted. Functionally, insulin decreases blood glucose concentration. It increases cell permeability to monosaccharides, amino acids and fatty acids. It accelerates glycolysis, the pentose phosphate cycle, and glycogen synthesis in liver. The protein is Insulin (ins) of Piaractus mesopotamicus (Small-scaled pacu).